We begin with the raw amino-acid sequence, 270 residues long: Myelin protein zero-like protein 1 (270 aa).

A signal peptide spans 1–35; it reads MAEAVGAVALIAAPARRRWLWSVLAAMLGLLTARI. An Ig-like V-type domain is found at 36–151; that stretch reads SALEVHTPKE…DIVVRPGHIR (116 aa). Over 36-162 the chain is Extracellular; that stretch reads SALEVHTPKE…HVVEIDNLLV (127 aa). Residues N50 and N130 are each glycosylated (N-linked (GlcNAc...) asparagine). A disulfide bond links C58 and C135. Residues 163–183 form a helical membrane-spanning segment; that stretch reads FLVWVVVGTVTAVVLGLTLLI. Residues 184–270 are Cytoplasmic-facing; sequence SLVLVVLYRR…SVVYADIRKD (87 aa). The interval 201–257 is disordered; the sequence is TGCSTSERLSPVKQAPRKCPSDTEGLVKSPPSAGSHQGPVIYAQLDHSGGHHSGKIN. S204, S206, S210, and S221 each carry phosphoserine. An ITIM motif 1 motif is present at residues 240–245; sequence VIYAQL. A Phosphotyrosine modification is found at Y242. Phosphoserine is present on S261. The short motif at 262 to 267 is the ITIM motif 2 element; that stretch reads VVYADI. Residue Y264 is modified to Phosphotyrosine.

Belongs to the myelin P0 protein family. Interacts with phosphorylated PTPN11/SHP-2. Phosphorylated on tyrosine residues upon stimulation with pervanadate and concanavalin-A (ConA). Phosphorylation at Tyr-242 and Tyr-264 is required for interaction with PTPN11/SHP-2. Dephosphorylated by PTPN11/SHP-2 (in vitro).

It localises to the membrane. Its function is as follows. Cell surface receptor, which is involved in signal transduction processes. Recruits PTPN11/SHP-2 to the cell membrane and is a putative substrate of PTPN11/SHP-2. Is a major receptor for concanavalin-A (ConA) and is involved in cellular signaling induced by ConA, which probably includes Src family tyrosine-protein kinases. Isoform 2 seems to have a dominant negative role; it blocks tyrosine phosphorylation of MPZL1 induced by ConA. Isoform 1, but not isoform 2, may be involved in regulation of integrin-mediated cell motility. This is Myelin protein zero-like protein 1 (Mpzl1) from Mus musculus (Mouse).